Reading from the N-terminus, the 52-residue chain is Photosystem II reaction center protein M (52 aa).

Residues 6-26 (FGFAASLLFVGVPTIFLIGLF) traverse the membrane as a helical segment. The tract at residues 31–52 (DGEKSSFYSDTSKGRLSPEPKK) is disordered. Residues 42-52 (SKGRLSPEPKK) show a composition bias toward basic and acidic residues.

This sequence belongs to the PsbM family. As to quaternary structure, PSII is composed of 1 copy each of membrane proteins PsbA, PsbB, PsbC, PsbD, PsbE, PsbF, PsbH, PsbI, PsbJ, PsbK, PsbL, PsbM, PsbT, PsbX, PsbY, Psb30/Ycf12, peripheral proteins PsbO, CyanoQ (PsbQ), PsbU, PsbV and a large number of cofactors. It forms dimeric complexes.

The protein resides in the cellular thylakoid membrane. In terms of biological role, one of the components of the core complex of photosystem II (PSII). PSII is a light-driven water:plastoquinone oxidoreductase that uses light energy to abstract electrons from H(2)O, generating O(2) and a proton gradient subsequently used for ATP formation. It consists of a core antenna complex that captures photons, and an electron transfer chain that converts photonic excitation into a charge separation. This subunit is found at the monomer-monomer interface. This Prochlorococcus marinus (strain NATL1A) protein is Photosystem II reaction center protein M.